Here is a 1765-residue protein sequence, read N- to C-terminus: RANBP2-like and GRIP domain-containing protein 5/6 (1765 aa).

T19 carries the post-translational modification Phosphothreonine. S21 is modified (phosphoserine). TPR repeat units lie at residues 26 to 59, 60 to 93, and 648 to 681; these read SMKGFYFAKLYYEAKEYDLAKKYICTYINVQERD, PKAHRFLGLLYELEENTEKAVECYRRSVELNPTQ, and EDAHITFAMLDAVNGNIEDAVTAFESIKSVVSYW. Disordered stretches follow at residues 760–804 and 924–945; these read GPLY…PRWT and FGISEPGNQEKKREKPLENDTG. The span at 778–797 shows a compositional bias: low complexity; that stretch reads STPSPTKYSLSPSKSYKYSP. A compositionally biased stretch (basic and acidic residues) spans 931 to 941; that stretch reads NQEKKREKPLE. The RanBD1 1 domain maps to 1036–1172; that stretch reads HFEPVVQMPE…FEECQRLLLD (137 aa). 2 disordered regions span residues 1214 to 1247 and 1306 to 1330; these read KVTEEENKGSGTGAAGASDTTIKPNAENTGPTLE and AKLNQSGTSVGTDEESVVTQEEERD. A compositionally biased stretch (polar residues) spans 1235–1244; that stretch reads IKPNAENTGP. Positions 1317-1329 are enriched in acidic residues; the sequence is TDEESVVTQEEER. The 137-residue stretch at 1333-1469 folds into the RanBD1 2 domain; the sequence is YFEPVVPLPD…FDEAKTAQEK (137 aa). The span at 1580-1593 shows a compositional bias: polar residues; that stretch reads NNSETSSVAQSGSE. Positions 1580 to 1621 are disordered; the sequence is NNSETSSVAQSGSESKVEPKKCELSKNSDIEQSSDSKVKNLS. Positions 1594 to 1617 are enriched in basic and acidic residues; that stretch reads SKVEPKKCELSKNSDIEQSSDSKV. Residues 1702–1752 enclose the GRIP domain; that stretch reads REKSAANLEYLKNVLLQFIFLKPGSERERLLPVINTMLQLSPEEKGKLAAV.

In terms of tissue distribution, expressed in testis.

The protein localises to the cytoplasm. The polypeptide is RANBP2-like and GRIP domain-containing protein 5/6 (RGPD5) (Homo sapiens (Human)).